The chain runs to 234 residues: Thymidylate kinase (234 aa).

11–18 (GLEGSGKT) provides a ligand contact to ATP.

Belongs to the thymidylate kinase family.

It catalyses the reaction dTMP + ATP = dTDP + ADP. Functionally, phosphorylation of dTMP to form dTDP in both de novo and salvage pathways of dTTP synthesis. The sequence is that of Thymidylate kinase from Wigglesworthia glossinidia brevipalpis.